Consider the following 379-residue polypeptide: S-adenosylmethionine decarboxylase proenzyme (379 aa).

Active-site residues include E30 and E33. S96 acts as the Schiff-base intermediate with substrate; via pyruvic acid in catalysis. S96 carries the pyruvic acid (Ser); by autocatalysis modification. C110 acts as the Proton donor; for catalytic activity in catalysis. Catalysis depends on proton acceptor; for processing activity residues S254 and H267.

This sequence belongs to the eukaryotic AdoMetDC family. As to quaternary structure, heterotetramer of two alpha and two beta chains. Requires pyruvate as cofactor. Post-translationally, is synthesized initially as an inactive proenzyme. Formation of the active enzyme involves a self-maturation process in which the active site pyruvoyl group is generated from an internal serine residue via an autocatalytic post-translational modification. Two non-identical subunits are generated from the proenzyme in this reaction, and the pyruvate is formed at the N-terminus of the alpha chain, which is derived from the carboxyl end of the proenzyme. The post-translation cleavage follows an unusual pathway, termed non-hydrolytic serinolysis, in which the side chain hydroxyl group of the serine supplies its oxygen atom to form the C-terminus of the beta chain, while the remainder of the serine residue undergoes an oxidative deamination to produce ammonia and the pyruvoyl group blocking the N-terminus of the alpha chain.

It catalyses the reaction S-adenosyl-L-methionine + H(+) = S-adenosyl 3-(methylsulfanyl)propylamine + CO2. It participates in amine and polyamine biosynthesis; S-adenosylmethioninamine biosynthesis; S-adenosylmethioninamine from S-adenosyl-L-methionine: step 1/1. In terms of biological role, S-adenosylmethionine decarboxylase is essential for the biosynthesis of spermine and spermidine. The alpha subunit contains the active site. This chain is S-adenosylmethionine decarboxylase proenzyme (amd1), found in Dictyostelium discoideum (Social amoeba).